The primary structure comprises 680 residues: DNA-directed RNA polymerase subunit beta' (680 aa).

4 residues coordinate Zn(2+): C69, C71, C87, and C90. The Mg(2+) site is built by D489, D491, and D493.

It belongs to the RNA polymerase beta' chain family. RpoC1 subfamily. In plastids the minimal PEP RNA polymerase catalytic core is composed of four subunits: alpha, beta, beta', and beta''. When a (nuclear-encoded) sigma factor is associated with the core the holoenzyme is formed, which can initiate transcription. Mg(2+) is required as a cofactor. It depends on Zn(2+) as a cofactor.

The protein localises to the plastid. It is found in the chloroplast. It catalyses the reaction RNA(n) + a ribonucleoside 5'-triphosphate = RNA(n+1) + diphosphate. Functionally, DNA-dependent RNA polymerase catalyzes the transcription of DNA into RNA using the four ribonucleoside triphosphates as substrates. The chain is DNA-directed RNA polymerase subunit beta' from Carica papaya (Papaya).